Reading from the N-terminus, the 316-residue chain is Aspartate-semialdehyde dehydrogenase (316 aa).

NADP(+) contacts are provided by residues 13 to 16 (TGAV) and 41 to 42 (RS). A phosphate-binding site is contributed by arginine 101. The Acyl-thioester intermediate role is filled by cysteine 132. Glutamine 159 contacts substrate. Residue 162–163 (SG) participates in NADP(+) binding. A phosphate-binding site is contributed by lysine 216. Arginine 238 contributes to the substrate binding site. Residue histidine 245 is the Proton acceptor of the active site. NADP(+) is bound at residue asparagine 316.

The protein belongs to the aspartate-semialdehyde dehydrogenase family. Homodimer.

The enzyme catalyses L-aspartate 4-semialdehyde + phosphate + NADP(+) = 4-phospho-L-aspartate + NADPH + H(+). The protein operates within amino-acid biosynthesis; L-lysine biosynthesis via DAP pathway; (S)-tetrahydrodipicolinate from L-aspartate: step 2/4. It participates in amino-acid biosynthesis; L-methionine biosynthesis via de novo pathway; L-homoserine from L-aspartate: step 2/3. Its pathway is amino-acid biosynthesis; L-threonine biosynthesis; L-threonine from L-aspartate: step 2/5. In terms of biological role, catalyzes the NADPH-dependent formation of L-aspartate-semialdehyde (L-ASA) by the reductive dephosphorylation of L-aspartyl-4-phosphate. The chain is Aspartate-semialdehyde dehydrogenase (asd) from Vibrio mimicus.